A 239-amino-acid chain; its full sequence is Demethylmenaquinone methyltransferase (239 aa).

S-adenosyl-L-methionine contacts are provided by residues Thr60, Asp81, and 106–107 (DA).

This sequence belongs to the class I-like SAM-binding methyltransferase superfamily. MenG/UbiE family.

It catalyses the reaction a 2-demethylmenaquinol + S-adenosyl-L-methionine = a menaquinol + S-adenosyl-L-homocysteine + H(+). It participates in quinol/quinone metabolism; menaquinone biosynthesis; menaquinol from 1,4-dihydroxy-2-naphthoate: step 2/2. Functionally, methyltransferase required for the conversion of demethylmenaquinol (DMKH2) to menaquinol (MKH2). This Staphylococcus haemolyticus (strain JCSC1435) protein is Demethylmenaquinone methyltransferase.